We begin with the raw amino-acid sequence, 319 residues long: Acetyl-coenzyme A carboxylase carboxyl transferase subunit alpha (319 aa).

In terms of domain architecture, CoA carboxyltransferase C-terminal spans 35–296 (NIDEEVQRLR…KTQLLADLED (262 aa)).

This sequence belongs to the AccA family. In terms of assembly, acetyl-CoA carboxylase is a heterohexamer composed of biotin carboxyl carrier protein (AccB), biotin carboxylase (AccC) and two subunits each of ACCase subunit alpha (AccA) and ACCase subunit beta (AccD).

The protein resides in the cytoplasm. It carries out the reaction N(6)-carboxybiotinyl-L-lysyl-[protein] + acetyl-CoA = N(6)-biotinyl-L-lysyl-[protein] + malonyl-CoA. The protein operates within lipid metabolism; malonyl-CoA biosynthesis; malonyl-CoA from acetyl-CoA: step 1/1. Its function is as follows. Component of the acetyl coenzyme A carboxylase (ACC) complex. First, biotin carboxylase catalyzes the carboxylation of biotin on its carrier protein (BCCP) and then the CO(2) group is transferred by the carboxyltransferase to acetyl-CoA to form malonyl-CoA. This Edwardsiella ictaluri (strain 93-146) protein is Acetyl-coenzyme A carboxylase carboxyl transferase subunit alpha.